Reading from the N-terminus, the 246-residue chain is Predicted GPI-anchored protein 33 (246 aa).

The first 16 residues, 1–16, serve as a signal peptide directing secretion; the sequence is MRGIILLSFVLTSCLA. N-linked (GlcNAc...) asparagine glycosylation occurs at N214. A lipid anchor (GPI-anchor amidated asparagine) is attached at N219. The propeptide at 220 to 246 is removed in mature form; it reads AAGVYSTNSVLVFVSICIGFIGGSLGI.

The protein localises to the cell membrane. This Candida albicans (strain SC5314 / ATCC MYA-2876) (Yeast) protein is Predicted GPI-anchored protein 33 (PGA33).